Consider the following 211-residue polypeptide: Nucleoside triphosphate pyrophosphatase (211 aa).

Asp75 (proton acceptor) is an active-site residue.

The protein belongs to the Maf family. The cofactor is a divalent metal cation.

The protein localises to the cytoplasm. The enzyme catalyses a ribonucleoside 5'-triphosphate + H2O = a ribonucleoside 5'-phosphate + diphosphate + H(+). The catalysed reaction is a 2'-deoxyribonucleoside 5'-triphosphate + H2O = a 2'-deoxyribonucleoside 5'-phosphate + diphosphate + H(+). In terms of biological role, nucleoside triphosphate pyrophosphatase. May have a dual role in cell division arrest and in preventing the incorporation of modified nucleotides into cellular nucleic acids. The chain is Nucleoside triphosphate pyrophosphatase from Prochlorococcus marinus (strain NATL1A).